Here is a 172-residue protein sequence, read N- to C-terminus: Cyclin-L1 (172 aa).

The interval 1–36 is disordered; sequence MASGPHSTATAAAAASSAAPSAGGSSSGTTTTTTTT. Positions 88–168 are cyclin-like; that stretch reads ELIQAAGILL…LRGKSDQLHL (81 aa).

It belongs to the cyclin family. Cyclin L subfamily. As to quaternary structure, interacts with POLR2A via its hyperphosphorylated C-terminal domain (CTD). Interacts with CDK11A, CDK11B, CDK12 and CDK13. May form a ternary complex with CDK11B and casein kinase II (CKII). Interacts with pre-mRNA-splicing factors, including at least SRSF1, SRSF2 and SRSF7/SLU7.

It localises to the nucleus speckle. It is found in the nucleus. The protein resides in the nucleoplasm. Functionally, involved in pre-mRNA splicing. Functions in association with cyclin-dependent kinases (CDKs). May play a role in the regulation of RNA polymerase II (pol II). Inhibited by the CDK-specific inhibitor CDKN1A/p21. This is Cyclin-L1 (CCNL1) from Pongo abelii (Sumatran orangutan).